Reading from the N-terminus, the 464-residue chain is UDP-N-acetylmuramoylalanine--D-glutamate ligase (464 aa).

127–133 (GSNGKST) contributes to the ATP binding site.

The protein belongs to the MurCDEF family.

It is found in the cytoplasm. It carries out the reaction UDP-N-acetyl-alpha-D-muramoyl-L-alanine + D-glutamate + ATP = UDP-N-acetyl-alpha-D-muramoyl-L-alanyl-D-glutamate + ADP + phosphate + H(+). The protein operates within cell wall biogenesis; peptidoglycan biosynthesis. Functionally, cell wall formation. Catalyzes the addition of glutamate to the nucleotide precursor UDP-N-acetylmuramoyl-L-alanine (UMA). In Dinoroseobacter shibae (strain DSM 16493 / NCIMB 14021 / DFL 12), this protein is UDP-N-acetylmuramoylalanine--D-glutamate ligase.